The sequence spans 255 residues: uncharacterized protein (255 aa).

It belongs to the IIV-6 155L family.

This is an uncharacterized protein from Acheta domesticus (House cricket).